The following is a 98-amino-acid chain: mRNA interferase toxin MqsR (98 aa).

In terms of assembly, might be a dimer. Also reported to be a monomer. Crystallizes as a heterotetramer with MqsA, MqsR-MqsA(2)-MqsR. Purifies as a possible heterohexamer of 2 MqsR dimers and 1 MqsA dimer. When the 2 dissociate the MsqR mRNA interferase becomes active.

Its function is as follows. Toxic component of a type II toxin-antitoxin (TA) system. Plays a significant role in the control of biofilm formation and induction of persister cells in the presence of antibiotics. An mRNA interferase which has been reported to be translation-independent. It has also been reported to be translation-dependent. Cleavage has been reported to occur on either side of G in the sequence GCU. Also reported to cleave after C in GC(A/U) sequences. There are only 14 genes in E.coli W3110 (and probably also MG1655) that do not have a GCU sequence and thus are resistant to the mRNA interferase activity; among these is the gene for toxin GhoT. Overexpression of MqsR causes cessation of cell growth and inhibits cell proliferation via inhibition of translation as well as increasing persister cell formation; these effects are overcome by concomitant or subsequent expression of antitoxin MqsA. Cross-talk can occur between different TA systems. Ectopic expression of this toxin induces transcription of the relBEF TA system operon with specific cleavage of the relBEF mRNA produced. Regulates the expression of GhoT/GhoS, a type V TA system. Persistence depends on toxin GhoT activity, which MqsR controls at the post-transcriptional level by selectively degrading the antitoxin ghoS segment of the ghoST mRNA. Overexpression leads to a dramatic increase in tolerance to the antibiotic ofloxacin. This TA system mediates cell growth during bile acid deoxycholate stress by degrading mRNA for probable deoxycholate-binding protein YgiS; bile acid detergents such as deoxycholate are important for host defense against bacterial growth in the gall bladder and duodenum. In terms of biological role, initially reported to act as a cotranscription factor with MqsA. Following further experiments, the MqsR-MqsA complex does not bind DNA and all reported data are actually due to a small fraction of free MqsA alone binding DNA. Addition of MqsR to a preformed MqsA-promoter DNA complex causes dissociation of the MqsA-DNA complex, probably causing derepression of MqsA-repressed transcripts. Does not bind DNA in the presence or absence of MqsA. The chain is mRNA interferase toxin MqsR from Escherichia coli (strain K12).